We begin with the raw amino-acid sequence, 566 residues long: Myo-inositol transporter 1A (566 aa).

Residues 1-64 (MSDEKNYGIS…ERTEKLTKFV (64 aa)) are Cytoplasmic-facing. A helical transmembrane segment spans residues 65–85 (VGLALFASVSGFCFGFDTGVI). The Extracellular portion of the chain corresponds to 86–106 (SAALVSIKDDFGHILDDTEKE). Residues 107–127 (WISAATSCGALVGALSSGALA) traverse the membrane as a helical segment. Residues 128–140 (DRVGRKWTLAVGD) lie on the Cytoplasmic side of the membrane. Residues 141-161 (VWFTLGAIIICSSFSVVQMIV) traverse the membrane as a helical segment. The Extracellular portion of the chain corresponds to 162–163 (GR). A helical membrane pass occupies residues 164-184 (AVLGLGVGTAAAIAPLYIAEV). At 185–192 (APTRFRGA) the chain is on the cytoplasmic side. The helical transmembrane segment at 193–213 (LVTVQSIAITGGQFFSYCIGI) threads the bilayer. Residues 214–222 (PLTGHNGWR) are Extracellular-facing. Residues 223-243 (IQFAIGIVPAVVQAAVVHFLP) form a helical membrane-spanning segment. At 244–313 (ESPRYDLLRG…VLTEGKYRKP (70 aa)) the chain is on the cytoplasmic side. The helical transmembrane segment at 314–334 (AITALGIGIFQQLCGFNSLMY) threads the bilayer. Topologically, residues 335-349 (YAATIFSYAGFDNPT) are extracellular. The helical transmembrane segment at 350–370 (SVGLIVSGTNWFFTFVAMMIL) threads the bilayer. At 371-377 (DRVGKRR) the chain is on the cytoplasmic side. A helical membrane pass occupies residues 378 to 398 (ILLSTYPGMIAGLALASVAFW). The Extracellular portion of the chain corresponds to 399-421 (KMTGSTGHRLVEGTEYPQQWSNM). Residues 422–442 (MLGMMVVFIAFYATGSGNITW) form a helical membrane-spanning segment. The Cytoplasmic portion of the chain corresponds to 443–458 (TVGEMFPLEMRGIGAS). A helical transmembrane segment spans residues 459-479 (ILAGGVWAANIVISATFLTLM). The Extracellular segment spans residues 480 to 485 (NAIGPT). A helical membrane pass occupies residues 486 to 506 (PTFALYAGICLAGLIFIYFCY). Topologically, residues 507 to 566 (PEPSGLSLEEIQIIYNYGFGVQKSREIRAEHKLKAQEMRDRANSHIGGSATASDDQLNKV) are cytoplasmic. The tract at residues 546–566 (DRANSHIGGSATASDDQLNKV) is disordered. Positions 556 to 566 (ATASDDQLNKV) are enriched in polar residues.

The protein belongs to the major facilitator superfamily. Sugar transporter (TC 2.A.1.1) family.

It localises to the cell membrane. It carries out the reaction myo-inositol(out) + H(+)(out) = myo-inositol(in) + H(+)(in). Major transporter for myo-inositol. Plays a role in the traversal of the host blood-brain barrier. The polypeptide is Myo-inositol transporter 1A (Cryptococcus neoformans var. grubii serotype A (strain H99 / ATCC 208821 / CBS 10515 / FGSC 9487) (Filobasidiella neoformans var. grubii)).